The chain runs to 293 residues: MSIRTPMKLGIPKGSLEEATINLLARSGWKIRKHHRNYFPEINDPELTARLCRVQEIPRYIEDGILDVGLTGKDWLLETGSDVVVVSDLVYSKVSNRPARWVLAVAGDSPYTRPEDLAGKRIATELLGVTKRYFADAGIEVNVQYSWGATEAKVVEGLADAIVEVTETGTTIKAHGLRIISEVLLTNTVLIANRAAWEDPCRRRKIEQIDLLLQGALRADSLVGLKMNVPTRCLDAVLDQLPSLNSPTVAGLRDNTWFAVEIVVDNGVVRDLIPRLREAGAEGIIEYALNKVI.

Belongs to the ATP phosphoribosyltransferase family. Long subfamily. The cofactor is Mg(2+).

It is found in the cytoplasm. It catalyses the reaction 1-(5-phospho-beta-D-ribosyl)-ATP + diphosphate = 5-phospho-alpha-D-ribose 1-diphosphate + ATP. The protein operates within amino-acid biosynthesis; L-histidine biosynthesis; L-histidine from 5-phospho-alpha-D-ribose 1-diphosphate: step 1/9. With respect to regulation, feedback inhibited by histidine. In terms of biological role, catalyzes the condensation of ATP and 5-phosphoribose 1-diphosphate to form N'-(5'-phosphoribosyl)-ATP (PR-ATP). Has a crucial role in the pathway because the rate of histidine biosynthesis seems to be controlled primarily by regulation of HisG enzymatic activity. The polypeptide is ATP phosphoribosyltransferase (Nitratidesulfovibrio vulgaris (strain ATCC 29579 / DSM 644 / CCUG 34227 / NCIMB 8303 / VKM B-1760 / Hildenborough) (Desulfovibrio vulgaris)).